The sequence spans 65 residues: Large ribosomal subunit protein bL35 (65 aa).

It belongs to the bacterial ribosomal protein bL35 family.

This Oleidesulfovibrio alaskensis (strain ATCC BAA-1058 / DSM 17464 / G20) (Desulfovibrio alaskensis) protein is Large ribosomal subunit protein bL35.